The primary structure comprises 147 residues: Microsomal glutathione S-transferase 2 (147 aa).

3 helical membrane passes run 6–26, 59–79, and 111–131; these read ILLAAVSILSACQQSYFALQV, FYPIFIITLWMAGWYFNQVFA, and SLGILALLTLLGALGIANSFL.

The protein belongs to the MAPEG family. In terms of assembly, homotrimer. Liver, spleen, skeletal muscle, heart, adrenals, pancreas, prostate, testis, fetal liver, and fetal spleen. Very low expression in lung, brain, placenta and bone marrow. Abundantly expressed in human umbilical vein endothelial cells (at protein level).

The protein localises to the endoplasmic reticulum membrane. It localises to the microsome membrane. The enzyme catalyses RX + glutathione = an S-substituted glutathione + a halide anion + H(+). The catalysed reaction is 1-chloro-2,4-dinitrobenzene + glutathione = 2,4-dinitrophenyl-S-glutathione + chloride + H(+). It catalyses the reaction leukotriene C4 = leukotriene A4 + glutathione. It carries out the reaction (5S)-hydroperoxy-(6E,8Z,11Z,14Z)-eicosatetraenoate + 2 glutathione = (5S)-hydroxy-(6E,8Z,11Z,14Z)-eicosatetraenoate + glutathione disulfide + H2O. With respect to regulation, each monomer can bind on GSH molecule but only one subunit is catalytically active. Its function is as follows. Catalyzes several different glutathione-dependent reactions. Catalyzes the glutathione-dependent reduction of lipid hydroperoxides, such as 5-HPETE. Has glutathione transferase activity, toward xenobiotic electrophiles, such as 1-chloro-2, 4-dinitrobenzene (CDNB). Also catalyzes the conjugation of leukotriene A4 with reduced glutathione to form leukotriene C4 (LTC4). Involved in oxidative DNA damage induced by ER stress and anticancer agents by activating LTC4 biosynthetic machinery in nonimmune cells. The sequence is that of Microsomal glutathione S-transferase 2 (MGST2) from Homo sapiens (Human).